Here is a 412-residue protein sequence, read N- to C-terminus: Multidrug resistance protein MdtG (412 aa).

The next 11 membrane-spanning stretches (helical) occupy residues 19–39, 56–76, 90–110, 113–133, 144–164, 171–191, 222–242, 254–274, 288–308, 317–337, and 376–396; these read LGCF…PLYV, LVFS…GGLA, LGMS…QFLL, ALLG…ATQI, TLST…GFLA, TVFF…LFLI, LFVT…ILTL, IAFI…MSAP, ILIV…FVQT, FLLG…LVYN, and AVFL…TLSL.

The protein belongs to the major facilitator superfamily. DHA1 family. MdtG (TC 2.A.1.2.20) subfamily.

The protein localises to the cell inner membrane. The polypeptide is Multidrug resistance protein MdtG (Klebsiella pneumoniae (strain 342)).